The sequence spans 1021 residues: Inversin (1021 aa).

ANK repeat units lie at residues 7 to 36 (QNPS…LRDS), 40 to 69 (FGRT…GINK), 73 to 102 (SQRT…DWRL), 106 to 137 (EEMT…EVDT), 141 to 170 (NKQT…NIGI), 174 to 206 (EGKI…TESL), 213 to 243 (EGRT…SVTA), 247 to 276 (LFRT…SGMI), 281 to 310 (QGAT…VRDE), 314 to 343 (EGRT…DIDI), 349 to 378 (YGGT…MVDP), 382 to 411 (MKHT…RVDL), 415 to 444 (DGHS…SPNL), 448 to 477 (AGRT…DPNI), 481 to 510 (EGRT…FPNH), and 516 to 546 (ERYT…SIAA). Residues 483–491 (RTALHWSCN) carry the D-box 1 motif. The 30-residue stretch at 548-577 (QDIAASSIQALYKGYKVRRAFRERKKLLMR) folds into the IQ 1 domain. Basic and acidic residues-rich tracts occupy residues 579-598 (EQLR…REAE) and 653-669 (SRRE…REPE). 3 disordered regions span residues 579–602 (EQLR…QQLS), 632–691 (KDSV…KKCP), and 704–868 (GPDT…GTCS). Low complexity predominate over residues 722–731 (PAGSSRPGSA). Composition is skewed to polar residues over residues 759–781 (GAHS…TSKG) and 791–802 (TGSQPSNNTSVT). The segment covering 803-866 (RQKEKRQEKE…KEKEKKKDGT (64 aa)) has biased composition (basic and acidic residues). The D-box 2 signature appears at 862–870 (KKDGTCSKN). The 30-residue stretch at 869–898 (KNQAAVVIQRAWRRSCVRGRIRKVLCRSLK) folds into the IQ 2 domain.

Binds calmodulin via its IQ domains.

Its subcellular location is the cytoplasm. The protein localises to the cytoskeleton. Functionally, required for normal renal development and establishment of left-right axis. Probably acts as a molecular switch between different Wnt signaling pathways. Inhibits the canonical Wnt pathway by targeting cytoplasmic disheveled for degradation by the ubiquitin-proteasome. This suggests that it is required in renal development to oppose the repression of terminal differentiation of tubular epithelial cells by Wnt signaling. The sequence is that of Inversin (invs) from Danio rerio (Zebrafish).